Consider the following 457-residue polypeptide: MGEAARHPDGDFSDVGNLHAQDVHQALEQHMLVDGYDLVLDLDASSGVWLVDAVTQKRYLDLFSFFASAPLGINPPSIVEDPAFMRELAVAAVNKPSNPDLYSVPYARFVKTFARVLGDPRLPRLFFVDGGALAVENALKAALDWKAQKLGLAEPDTDRLQVLHLERSFHGRSGYTMSLTNTEPSKTARFPKFGWPRISSPALQHPPAEHTGANQEAERRALEAAREAFAAADGMIACFIAEPIQGEGGDNHLSAEFLQAMQRLCHENDALFVLDEVQSGCGITGTAWAYQQLGLQPDLVAFGKKTQVCGVMGGGRIDEVPENVFAVSSRISSTWGGNLADMVRATRLLETIERTQVFDTVVQRGKYFRDGLEDLAARHPSVVTNARGRGLMCAVDLPDTRTRNEVLRLMYTEHQVIALPCGGRSLRFRPALTIAEHEIDQALQALASSVTAVAESV.

Pyridoxal 5'-phosphate is bound by residues G131 and A132. R172 and Q278 together coordinate 2-oxoglutarate. An L-lysine-binding site is contributed by R172. Q278 provides a ligand contact to pyridoxal 5'-phosphate. An N6-(pyridoxal phosphate)lysine modification is found at K304. R427 contacts 2-oxoglutarate.

It belongs to the class-III pyridoxal-phosphate-dependent aminotransferase family. As to quaternary structure, monomer. It depends on pyridoxal 5'-phosphate as a cofactor.

The enzyme catalyses L-lysine + 2-oxoglutarate = (S)-2-amino-6-oxohexanoate + L-glutamate. It participates in antibiotic biosynthesis; cephamycin C biosynthesis. Activity is induced in the presence of high concentrations of lysine, but not by L-alpha-aminoadipic acid. Not repressed by ammonium ions. In terms of biological role, catalyzes the transfer of the terminal amino group of L-lysine to alpha-ketoglutarate to yield L-glutamate and 2-aminoadipate 6-semialdehyde ((S)-2-amino-6-oxohexanoate), which is spontaneously converted to the dehydrated form 1-piperideine 6-carboxylate. Shows a high specificity for L-lysine as substrate although L-ornithine can also be used, leading to the formation of an o-aminobenzaldehyde reactive compound. Only cis-oxaloacetate and pyruvate can replace alpha-ketoglutarate, but with very low efficiency. In Streptomyces clavuligerus, this protein is L-lysine-epsilon aminotransferase.